A 364-amino-acid chain; its full sequence is Dimethylsulfoniopropionate demethylase DmdA (364 aa).

It belongs to the GcvT family. DmdA subfamily.

It carries out the reaction S,S-dimethyl-beta-propiothetin + (6S)-5,6,7,8-tetrahydrofolate = 3-(methylsulfanyl)propanoate + (6S)-5-methyl-5,6,7,8-tetrahydrofolate + H(+). Involved in the assimilation of dimethylsulphoniopropionate (DMSP), an important compound in the fixation of carbon in marine phytoplankton, by mediating demethylation of dimethylsulfoniopropionate (DMSP) to methyl-mercaptopropionate (MMPA). The intracellular concentration of DMSP is estimated to be 70 mM. The sequence is that of Dimethylsulfoniopropionate demethylase DmdA from Ruegeria pomeroyi (strain ATCC 700808 / DSM 15171 / DSS-3) (Silicibacter pomeroyi).